A 1070-amino-acid polypeptide reads, in one-letter code: TSC22 domain family protein 1 (1070 aa).

The required for interaction with TGFBR1 and promotion of TGF-beta signaling stretch occupies residues 1–98 (MHQPPESTAA…SQAQLQAQPL (98 aa)). Disordered stretches follow at residues 1 to 110 (MHQP…KKSG), 125 to 289 (ISSN…PASV), 458 to 487 (VTSE…VGSG), 604 to 637 (YSQA…STQM), and 830 to 858 (TSQV…AQTP). Residues 36–45 (GSASALNAAG) show a composition bias toward low complexity. The segment covering 58–70 (FPPPSLLQPPPPA) has biased composition (pro residues). Positions 84-100 (SLNLLSQAQLQAQPLAP) are enriched in low complexity. The span at 133-142 (EDTESYDDLD) shows a compositional bias: acidic residues. Over residues 216–240 (HPHHLHHHHHIHHGHHLQHGHHHPS) the composition is skewed to basic residues. Low complexity predominate over residues 241 to 250 (HVAVASASIP). Positions 261–271 (KLSTTGSSDSI) are enriched in polar residues. Residue serine 263 is modified to Phosphoserine. 2 stretches are compositionally biased toward low complexity: residues 272 to 289 (TPVA…PASV) and 465 to 478 (TSGS…STRS). Residues 611–622 (VQTPLPGAPPPQ) show a composition bias toward pro residues. A compositionally biased stretch (low complexity) spans 830 to 845 (TSQVSSAGPSGMPSAP). A compositionally biased stretch (polar residues) spans 849–858 (VPPQNIAQTP). Positions 1003–1024 (LKEQIKELIEKNSQLEQENNLL) are leucine-zipper. The segment at 1034 to 1070 (AQFQAQLQTGSPPATTQPQGTTQPPAQPASQGSGPTA) is disordered. Residues 1041–1070 (QTGSPPATTQPQGTTQPPAQPASQGSGPTA) show a composition bias toward low complexity.

The protein belongs to the TSC-22/Dip/Bun family. Forms homodimers. Forms heterodimers. Component of a complex composed of TSC22D1 (via N-terminus), TGFBR1 and TGFBR2; the interaction between TSC22D1 and TGFBR1 is inhibited by SMAD7 and promoted by TGFB1. Interacts with SMAD7; the interaction requires TGF-beta and the interaction is inhibited by TGFBR1. Interacts with TPT1/fortilin; interaction results in the destabilization of TSC22D1 protein and prevents TSC22D1-mediated apoptosis. Interacts with SMAD4 (via N-terminus). Interacts with ACVRL1/ALK1, ACVR1/ALK2, BMPR1A/ALK3, ACVR1B/ALK4, BMPR1B/ALK6, ACVR2A/ACTRII, and BMPR2. Interacts with SMAD6. Interacts with TFE3; the interaction is enhanced in the presence of TGF-beta. In terms of assembly, forms a heterodimer with TSC22D4/THG1. As to quaternary structure, forms a heterodimer with TSC22D4/THG1. Interacts with histone H1-2. Interacts with GNL3.

It localises to the cytoplasm. It is found in the nucleus. The protein resides in the cell membrane. The protein localises to the mitochondrion. Its function is as follows. Transcriptional repressor. Acts on the C-type natriuretic peptide (CNP) promoter. Acts to promote CASP3-mediated apoptosis. Positively regulates TGF-beta signaling by interacting with SMAD7 which inhibits binding of SMAD7 to TGFBR1, preventing recruitment of SMURF ubiquitin ligases to TGFBR1 and inhibiting SMURF-mediated ubiquitination and degradation of TGFBR1. Contributes to enhancement of TGF-beta signaling by binding to and modulating the transcription activator activity of SMAD4. Promotes TGF-beta-induced transcription of COL1A2; via its interaction with TFE3 at E-boxes in the gene proximal promoter. Plays a role in the repression of hematopoietic precursor cell growth. Promotes IL2 deprivation-induced apoptosis in T-lymphocytes, via repression of TSC22D3/GILZ transcription and activation of the caspase cascade. May act to negatively regulate TGFB3 signaling and thereby inhibit cell death in mammary gland cells. In terms of biological role, positively regulates cell death in response to TGFB3 during mammary gland involution. The chain is TSC22 domain family protein 1 from Pongo abelii (Sumatran orangutan).